A 624-amino-acid polypeptide reads, in one-letter code: Plastin-2 (624 aa).

2 consecutive EF-hand domains span residues 9–44 (EEME…ANLP) and 49–84 (RVRE…LKSS). Residues Asp22, Asp24, Asn26, His28, Glu33, Asp62, Asn64, Asp66, Lys68, and Glu73 each contribute to the Ca(2+) site. Calponin-homology (CH) domains are found at residues 118-234 (EEEK…KIGL), 262-373 (LSPE…NKYP), 392-501 (TREE…RRYT), and 513-621 (KIID…ARGM). 2 actin-binding regions span residues 118–373 (EEEK…NKYP) and 392–621 (TREE…ARGM).

Monomer. As to expression, expressed by macrophages (at protein level).

It is found in the cytoplasm. Its subcellular location is the cytoskeleton. The protein resides in the cell junction. The protein localises to the cell projection. It localises to the ruffle membrane. Actin-binding protein. Plays a role in the activation of T-cells. This Danio rerio (Zebrafish) protein is Plastin-2.